The primary structure comprises 193 residues: NADH-quinone oxidoreductase subunit B (193 aa).

Residues Cys-72, Cys-73, Cys-137, and Cys-167 each contribute to the [4Fe-4S] cluster site.

Belongs to the complex I 20 kDa subunit family. In terms of assembly, NDH-1 is composed of 14 different subunits. Subunits NuoB, C, D, E, F, and G constitute the peripheral sector of the complex. Requires [4Fe-4S] cluster as cofactor.

The protein localises to the cell inner membrane. The enzyme catalyses a quinone + NADH + 5 H(+)(in) = a quinol + NAD(+) + 4 H(+)(out). In terms of biological role, NDH-1 shuttles electrons from NADH, via FMN and iron-sulfur (Fe-S) centers, to quinones in the respiratory chain. The immediate electron acceptor for the enzyme in this species is believed to be ubiquinone. Couples the redox reaction to proton translocation (for every two electrons transferred, four hydrogen ions are translocated across the cytoplasmic membrane), and thus conserves the redox energy in a proton gradient. This is NADH-quinone oxidoreductase subunit B from Bartonella bacilliformis (strain ATCC 35685 / KC583 / Herrer 020/F12,63).